The sequence spans 198 residues: Recombination protein RecR (198 aa).

A C4-type zinc finger spans residues 57–72 (CSICGNLTESDPCAIC). The 96-residue stretch at 80–175 (TTILVVEESK…KVTRLARGLA (96 aa)) folds into the Toprim domain.

This sequence belongs to the RecR family.

Its function is as follows. May play a role in DNA repair. It seems to be involved in an RecBC-independent recombinational process of DNA repair. It may act with RecF and RecO. The chain is Recombination protein RecR from Lactococcus lactis subsp. lactis (strain IL1403) (Streptococcus lactis).